A 628-amino-acid chain; its full sequence is Zinc finger protein 555 (628 aa).

The KRAB domain occupies 4-77; sequence VVFEDVAVDF…ESKIATFTRN (74 aa). A C2H2-type 1; degenerate zinc finger spans residues 172-194; the sequence is YQCQECGQAYSCRSHLRMHVRTH. C2H2-type zinc fingers lie at residues 200–222, 228–250, 256–278, 284–306, 312–334, 340–362, 368–390, 396–418, 424–446, 452–474, 480–502, 508–530, 536–558, and 564–586; these read YVCKLCGKTFPRTSSLNRHVRIH, YECKQCGKAFIDFSSLTSHLRSH, YKCKECGKAFSYSSTFRRHTITH, YKCKECAEAFSYSSTFRRHMISH, HKCKECGEAFSYSSAFRRHMITH, YECKQCGKTFIYLQSFRRHERIH, YECKQCGKTFIYPQSFRRHERTH, YECNQCGKAFSHPSSFRGHMRVH, YECKQCGKTFNWPISLRKHMRTH, YECKQCGKAFSLSACFREHVRMH, YECKLCGKAFYCHISLQKHMRRH, YKCKQCGKAFSWPELLQQHVRTH, YECKECGKVFKWPSSLPIHMRLH, and YQCKHCGKAFNCSSSLRRHVRIH.

Belongs to the krueppel C2H2-type zinc-finger protein family.

It is found in the nucleus. Its function is as follows. May be involved in transcriptional regulation. The sequence is that of Zinc finger protein 555 (ZNF555) from Homo sapiens (Human).